The following is a 230-amino-acid chain: Probable dual specificity protein phosphatase DDB_G0283417 (230 aa).

The Tyrosine-protein phosphatase domain maps to Asn78–Phe230. Cys174 (phosphocysteine intermediate) is an active-site residue.

This sequence belongs to the protein-tyrosine phosphatase family. Non-receptor class dual specificity subfamily.

The catalysed reaction is O-phospho-L-tyrosyl-[protein] + H2O = L-tyrosyl-[protein] + phosphate. The enzyme catalyses O-phospho-L-seryl-[protein] + H2O = L-seryl-[protein] + phosphate. It catalyses the reaction O-phospho-L-threonyl-[protein] + H2O = L-threonyl-[protein] + phosphate. In terms of biological role, has a dual specificity toward Ser/Thr and Tyr-containing proteins. This is Probable dual specificity protein phosphatase DDB_G0283417 from Dictyostelium discoideum (Social amoeba).